Consider the following 311-residue polypeptide: tRNA dimethylallyltransferase (311 aa).

Residue 16 to 23 (GPTASGKS) participates in ATP binding. Residue 18–23 (TASGKS) participates in substrate binding. An interaction with substrate tRNA region spans residues 41–44 (DSMQ).

Belongs to the IPP transferase family. As to quaternary structure, monomer. Mg(2+) serves as cofactor.

It carries out the reaction adenosine(37) in tRNA + dimethylallyl diphosphate = N(6)-dimethylallyladenosine(37) in tRNA + diphosphate. Its function is as follows. Catalyzes the transfer of a dimethylallyl group onto the adenine at position 37 in tRNAs that read codons beginning with uridine, leading to the formation of N6-(dimethylallyl)adenosine (i(6)A). The protein is tRNA dimethylallyltransferase of Geobacter sulfurreducens (strain ATCC 51573 / DSM 12127 / PCA).